The sequence spans 908 residues: Alanine--tRNA ligase (908 aa).

Zn(2+)-binding residues include H596, H600, C698, and H702.

This sequence belongs to the class-II aminoacyl-tRNA synthetase family. It depends on Zn(2+) as a cofactor.

The protein resides in the cytoplasm. The catalysed reaction is tRNA(Ala) + L-alanine + ATP = L-alanyl-tRNA(Ala) + AMP + diphosphate. In terms of biological role, catalyzes the attachment of alanine to tRNA(Ala) in a two-step reaction: alanine is first activated by ATP to form Ala-AMP and then transferred to the acceptor end of tRNA(Ala). Also edits incorrectly charged Ser-tRNA(Ala) and Gly-tRNA(Ala) via its editing domain. The sequence is that of Alanine--tRNA ligase from Lysinibacillus sphaericus (strain C3-41).